Here is a 287-residue protein sequence, read N- to C-terminus: MPANQTRSRARERNNVLNRPEFMSLNQPIKSGGGGGGGESRGTARRPSQRQQQNQQQQGDNPQPENNKDKKELPEEDCMQLNPSFKGIAMNSLLAIDICMSKRLGVCAHPSSSWGSVRSMVKLLALTGHGIPWVFGTIVCLMRSNTLAGQEVLVNLLLALLLDVMTVSGMQKLVKRKGPWEMPPGFFDYLAMDIYSFPAAHASRAVMVSKFLLAHLVLAVPLRILLVLWAILVGISRVLLGRHHLTDVGCGFALGFLHYSLVEMVWLSSNTCQTLISIGTFNWSPLY.

Residues methionine 1–glutamate 75 form a disordered region. Over methionine 1–methionine 120 the chain is Cytoplasmic. The segment covering serine 31–serine 40 has biased composition (gly residues). Residues glutamine 49–glutamate 65 show a composition bias toward low complexity. Residues valine 121–leucine 141 form a helical membrane-spanning segment. The Extracellular segment spans residues methionine 142–threonine 146. Residues leucine 147 to valine 167 form a helical membrane-spanning segment. Over serine 168–histidine 215 the chain is Cytoplasmic. A helical transmembrane segment spans residues leucine 216–serine 236. Over arginine 237 to aspartate 247 the chain is Extracellular. The chain crosses the membrane as a helical span at residues valine 248–serine 268. Residues serine 269–tyrosine 287 lie on the Cytoplasmic side of the membrane.

The protein belongs to the PA-phosphatase related phosphoesterase family.

Its subcellular location is the nucleus envelope. It is found in the endoplasmic reticulum membrane. It localises to the membrane. In terms of biological role, plays a role as negative regulator of myoblast differentiation, in part through effects on MTOR signaling. Has no detectable enzymatic activity. The chain is Inactive phospholipid phosphatase 7 from Danio rerio (Zebrafish).